A 90-amino-acid chain; its full sequence is Small ribosomal subunit protein bS16 (90 aa).

This sequence belongs to the bacterial ribosomal protein bS16 family.

The sequence is that of Small ribosomal subunit protein bS16 from Listeria innocua serovar 6a (strain ATCC BAA-680 / CLIP 11262).